The following is a 645-amino-acid chain: Threonine--tRNA ligase (645 aa).

The region spanning 1-62 (MSIHITFPDG…VEDGSLEIVT (62 aa)) is the TGS domain. The catalytic stretch occupies residues 242–541 (DHRKLGKELD…LTEVYKGAFP (300 aa)). Zn(2+) is bound by residues C336, H387, and H518.

This sequence belongs to the class-II aminoacyl-tRNA synthetase family. Homodimer. Zn(2+) serves as cofactor.

It is found in the cytoplasm. It carries out the reaction tRNA(Thr) + L-threonine + ATP = L-threonyl-tRNA(Thr) + AMP + diphosphate + H(+). Functionally, catalyzes the attachment of threonine to tRNA(Thr) in a two-step reaction: L-threonine is first activated by ATP to form Thr-AMP and then transferred to the acceptor end of tRNA(Thr). Also edits incorrectly charged L-seryl-tRNA(Thr). This Enterococcus faecalis (strain ATCC 700802 / V583) protein is Threonine--tRNA ligase.